The sequence spans 89 residues: MLEHELIVTNKLGLHARATAKLVQTMSKFQSNTTLSTKGREVNAKSIMGVMLLAASQGTVIRVRIDGEDEHTAMQALSELFENRFNEDT.

The HPr domain occupies 1–88 (MLEHELIVTN…ELFENRFNED (88 aa)). The Pros-phosphohistidine intermediate role is filled by histidine 15. Serine 46 is modified (phosphoserine; by HPrK/P).

This sequence belongs to the HPr family.

It localises to the cytoplasm. With respect to regulation, phosphorylation on Ser-46 inhibits the phosphoryl transfer from enzyme I to HPr. General (non sugar-specific) component of the phosphoenolpyruvate-dependent sugar phosphotransferase system (sugar PTS). This major carbohydrate active-transport system catalyzes the phosphorylation of incoming sugar substrates concomitantly with their translocation across the cell membrane. The phosphoryl group from phosphoenolpyruvate (PEP) is transferred to the phosphoryl carrier protein HPr by enzyme I. Phospho-HPr then transfers it to the PTS EIIA domain. The sequence is that of Phosphocarrier protein HPr (ptsH) from Xylella fastidiosa (strain 9a5c).